Here is a 544-residue protein sequence, read N- to C-terminus: Involucrin (544 aa).

A disordered region spans residues Met-1–Leu-520. Positions Glu-76–His-90 are enriched in low complexity. Basic and acidic residues-rich tracts occupy residues Glu-96–Gln-117, Glu-124–Leu-152, Gln-202–Glu-234, Gln-252–Gly-271, Lys-283–Gln-297, Gln-304–Gln-347, Gln-354–Gln-411, Lys-423–Gln-437, and Lys-462–Gln-476. Positions Gln-477–Leu-494 are enriched in low complexity.

The protein belongs to the involucrin family. Directly or indirectly cross-linked to cornifelin (CNFN). In terms of processing, substrate of transglutaminase. Specific glutamines or lysines are cross-linked to keratins, desmoplakin and to inter involucrin molecules. As to expression, keratinocytes of epidermis and other stratified squamous epithelia.

The protein localises to the cytoplasm. Its function is as follows. Part of the insoluble cornified cell envelope (CE) of stratified squamous epithelia. This is Involucrin (IVL) from Aotus trivirgatus (Three-striped night monkey).